The following is a 34-amino-acid chain: Ribonuclease PL1 (34 aa).

An N-linked (GlcNAc...) asparagine; partial glycan is attached at Asn4. The Proton acceptor role is filled by His15.

This sequence belongs to the pancreatic ribonuclease family.

Its subcellular location is the lysosome. It catalyses the reaction an [RNA] containing cytidine + H2O = an [RNA]-3'-cytidine-3'-phosphate + a 5'-hydroxy-ribonucleotide-3'-[RNA].. The catalysed reaction is an [RNA] containing uridine + H2O = an [RNA]-3'-uridine-3'-phosphate + a 5'-hydroxy-ribonucleotide-3'-[RNA].. The sequence is that of Ribonuclease PL1 from Sus scrofa (Pig).